Consider the following 268-residue polypeptide: Thiazole synthase (268 aa).

Catalysis depends on lysine 108, which acts as the Schiff-base intermediate with DXP. 1-deoxy-D-xylulose 5-phosphate-binding positions include glycine 169, 195-196, and 217-218; these read AG and NS. The disordered stretch occupies residues 248-268; that stretch reads RLKENPLASPSSPLEGVISNN. Positions 255–268 are enriched in polar residues; sequence ASPSSPLEGVISNN.

This sequence belongs to the ThiG family. As to quaternary structure, homotetramer. Forms heterodimers with either ThiH or ThiS.

The protein localises to the cytoplasm. The catalysed reaction is [ThiS sulfur-carrier protein]-C-terminal-Gly-aminoethanethioate + 2-iminoacetate + 1-deoxy-D-xylulose 5-phosphate = [ThiS sulfur-carrier protein]-C-terminal Gly-Gly + 2-[(2R,5Z)-2-carboxy-4-methylthiazol-5(2H)-ylidene]ethyl phosphate + 2 H2O + H(+). It participates in cofactor biosynthesis; thiamine diphosphate biosynthesis. In terms of biological role, catalyzes the rearrangement of 1-deoxy-D-xylulose 5-phosphate (DXP) to produce the thiazole phosphate moiety of thiamine. Sulfur is provided by the thiocarboxylate moiety of the carrier protein ThiS. In vitro, sulfur can be provided by H(2)S. This chain is Thiazole synthase, found in Prochlorococcus marinus (strain NATL1A).